The following is a 216-amino-acid chain: Ras-related protein RABE1c (216 aa).

GTP is bound at residue 22–29 (GDSGVGKS). An Effector region motif is present at residues 44–52 (FITTIGIDF). GTP contacts are provided by residues 70–74 (DTAGQ), 128–131 (NKAD), and 159–160 (SA). S-geranylgeranyl cysteine attachment occurs at residues Cys-213 and Cys-214.

The protein belongs to the small GTPase superfamily. Rab family. Interacts with PI5K2.

The protein localises to the golgi apparatus membrane. The protein resides in the cell membrane. Involved in membrane trafficking from the Golgi to the plasma membrane. The polypeptide is Ras-related protein RABE1c (RABE1C) (Arabidopsis thaliana (Mouse-ear cress)).